The following is a 487-amino-acid chain: MMKGHFCIQNNKTLLFKSLIHPTSSHNLSPYLYFFLSSNKLNSSNISSSNFVITSNIRGYSSSQYSNKVYSWGSGLNGKLGHGLDETKIVVPKEIEIKEDDDNNRVFNQGKINKITSGTTYSIFSGYDQIKDRQVFYGCGDNRDAQLIVGNGKIQSLENIELLESPMLKSDQMKGKQLKQLISGTYHNACILNDSNSNNNNNNNKDRSLILLWGASNSGQIGSPEYNRVQYDPYNNKVLSEIGIKKISMGATFTIALSNDGKLYSFGSSTFNELGNGDMFNEREPKLIDNQLLQDNEIIDLECGFFHTVALTSDNKILTWGRNQESQCFPVPEGTGKGSFTNVQYLDTSSLGDHDKIIQIGASNLNSYILTENGNIYSIGSNDHGQCGIEKSNFKKGILNKIKIGDDGNIKVKKFYSRFKTVIVETTDGRFFGWGSNFDHQLALETRCIYFTPMELNNLNRLHKDYNIIDISISLSHCISLNSNPQK.

RCC1 repeat units follow at residues 66 to 127 (SNKV…FSGY), 207 to 259 (RSLI…ALSN), 260 to 313 (DGKL…ALTS), 373 to 426 (NGNI…IVET), and 428 to 483 (DGRF…SLNS).

This is RCC1 repeat-containing protein DDB_G0284033 from Dictyostelium discoideum (Social amoeba).